The chain runs to 127 residues: Aspartate 1-decarboxylase (127 aa).

Residue Ser25 is the Schiff-base intermediate with substrate; via pyruvic acid of the active site. Pyruvic acid (Ser) is present on Ser25. Thr57 contributes to the substrate binding site. Tyr58 acts as the Proton donor in catalysis. A substrate-binding site is contributed by 73–75 (GAA).

It belongs to the PanD family. Heterooctamer of four alpha and four beta subunits. It depends on pyruvate as a cofactor. In terms of processing, is synthesized initially as an inactive proenzyme, which is activated by self-cleavage at a specific serine bond to produce a beta-subunit with a hydroxyl group at its C-terminus and an alpha-subunit with a pyruvoyl group at its N-terminus.

Its subcellular location is the cytoplasm. It catalyses the reaction L-aspartate + H(+) = beta-alanine + CO2. It participates in cofactor biosynthesis; (R)-pantothenate biosynthesis; beta-alanine from L-aspartate: step 1/1. Catalyzes the pyruvoyl-dependent decarboxylation of aspartate to produce beta-alanine. This is Aspartate 1-decarboxylase from Halalkalibacterium halodurans (strain ATCC BAA-125 / DSM 18197 / FERM 7344 / JCM 9153 / C-125) (Bacillus halodurans).